The chain runs to 126 residues: uncharacterized protein (126 aa).

2 helical membrane passes run 40-57 and 72-94; these read IDKW…VSFF and ILIA…ILGG.

It is found in the cell membrane. This is an uncharacterized protein from Pasteurella multocida (strain Pm70).